Consider the following 179-residue polypeptide: Replication restart protein DnaT (179 aa).

Residues 156–179 (GGLPKRDVNTVSEPDSQIPPGFRG) are disordered.

It belongs to the DnaT family. In terms of assembly, homooligomerizes. Interacts with PriB. Component of the replication restart primosome. Primosome assembly occurs via a 'hand-off' mechanism. PriA binds to replication forks, subsequently PriB then DnaT bind; DnaT then displaces ssDNA to generate the helicase loading substrate.

Functionally, involved in the restart of stalled replication forks, which reloads the replicative helicase on sites other than the origin of replication. Can function in multiple replication restart pathways. Displaces ssDNA from a PriB-ssDNA complex. Probably forms a spiral filament on ssDNA. The polypeptide is Replication restart protein DnaT (Escherichia coli O1:K1 / APEC).